Here is a 205-residue protein sequence, read N- to C-terminus: Small ribosomal subunit protein uS4 (205 aa).

Residues 18-46 form a disordered region; sequence NIWGRPKSPVNRREYGPGQHGQRRKGKLS. The S4 RNA-binding domain occupies 94 to 157; sequence RRLDTVVFRA…KQLAIVLEAT (64 aa).

This sequence belongs to the universal ribosomal protein uS4 family. As to quaternary structure, part of the 30S ribosomal subunit. Contacts protein S5. The interaction surface between S4 and S5 is involved in control of translational fidelity.

In terms of biological role, one of the primary rRNA binding proteins, it binds directly to 16S rRNA where it nucleates assembly of the body of the 30S subunit. With S5 and S12 plays an important role in translational accuracy. The polypeptide is Small ribosomal subunit protein uS4 (Bradyrhizobium sp. (strain BTAi1 / ATCC BAA-1182)).